The following is a 210-amino-acid chain: Glutathione S-transferase P (210 aa).

The 80-residue stretch at 2 to 81 folds into the GST N-terminal domain; the sequence is PPYTVVYFPV…HLGRTLGLYG (80 aa). Residue Tyr4 is modified to Phosphotyrosine; by EGFR. Residues Tyr8, Arg14, Trp39, Lys45, and 52–53 contribute to the glutathione site; that span reads QL. Position 62 is a phosphothreonine (Thr62). 65–66 lines the glutathione pocket; the sequence is QS. Residues 83–204 enclose the GST C-terminal domain; that stretch reads DQQEAALVDM…ASPEYVNLPI (122 aa). Residues Lys103 and Lys116 each carry the N6-succinyllysine modification. At Lys128 the chain carries N6-acetyllysine. A Phosphotyrosine; by EGFR modification is found at Tyr199.

Belongs to the GST superfamily. Pi family. Homodimer. Interacts with CDK5.

The protein resides in the cytoplasm. Its subcellular location is the mitochondrion. It localises to the nucleus. It carries out the reaction RX + glutathione = an S-substituted glutathione + a halide anion + H(+). The enzyme catalyses prostaglandin J2 + glutathione = prostaglandin J2-S-(R)-glutathione. The catalysed reaction is prostaglandin J2 + glutathione = prostaglandin J2-S-(S)-glutathione. It catalyses the reaction prostaglandin A2 + glutathione = prostaglandin A2-S-(S)-glutathione. It carries out the reaction 11(S)-hydroxy-14(S),15(S)-epoxy-(5Z,8Z,12E)-eicosatrienoate + glutathione = (11S,15S)-dihydroxy-14(R)-S-glutathionyl-(5Z,8Z,12E)-eicosatrienoate. In terms of biological role, conjugation of reduced glutathione to a wide number of exogenous and endogenous hydrophobic electrophiles. Involved in the formation of glutathione conjugates of both prostaglandin A2 (PGA2) and prostaglandin J2 (PGJ2). Participates in the formation of novel hepoxilin regioisomers. Negatively regulates CDK5 activity via p25/p35 translocation to prevent neurodegeneration. The chain is Glutathione S-transferase P from Homo sapiens (Human).